We begin with the raw amino-acid sequence, 378 residues long: Probable selenide, water dikinase (378 aa).

Cys-33 is a catalytic residue. Residues Lys-36, 63 to 65 (GLD), Asp-83, Asp-106, and 158 to 160 (GQT) each bind ATP. Mg(2+) is bound at residue Asp-65. Asp-106 contributes to the Mg(2+) binding site. Mg(2+) is bound at residue Asp-260.

Belongs to the selenophosphate synthase 1 family. Class I subfamily. As to quaternary structure, homodimer. Requires Mg(2+) as cofactor.

The catalysed reaction is hydrogenselenide + ATP + H2O = selenophosphate + AMP + phosphate + 2 H(+). Synthesizes selenophosphate from selenide and ATP. The chain is Probable selenide, water dikinase (seld-1) from Caenorhabditis elegans.